We begin with the raw amino-acid sequence, 358 residues long: Mannonate dehydratase (358 aa).

The protein belongs to the mannonate dehydratase family. Requires Fe(2+) as cofactor. The cofactor is Mn(2+).

The enzyme catalyses D-mannonate = 2-dehydro-3-deoxy-D-gluconate + H2O. The protein operates within carbohydrate metabolism; pentose and glucuronate interconversion. Functionally, catalyzes the dehydration of D-mannonate. The polypeptide is Mannonate dehydratase (Lactococcus lactis subsp. cremoris (strain MG1363)).